A 345-amino-acid chain; its full sequence is Small ribosomal subunit protein mS45 (345 aa).

The N-terminal 27 residues, 1 to 27, are a transit peptide targeting the mitochondrion; it reads MSYGLTGTSSKLRGTSSIFSWTQVRHF.

It belongs to the mitochondrion-specific ribosomal protein mS45 family. Component of the mitochondrial small ribosomal subunit (mt-SSU). Mature yeast 74S mitochondrial ribosomes consist of a small (37S) and a large (54S) subunit. The 37S small subunit contains a 15S ribosomal RNA (15S mt-rRNA) and 34 different proteins. The 54S large subunit contains a 21S rRNA (21S mt-rRNA) and 46 different proteins.

It localises to the mitochondrion. Its function is as follows. Component of the mitochondrial ribosome (mitoribosome), a dedicated translation machinery responsible for the synthesis of mitochondrial genome-encoded proteins, including at least some of the essential transmembrane subunits of the mitochondrial respiratory chain. The mitoribosomes are attached to the mitochondrial inner membrane and translation products are cotranslationally integrated into the membrane. This Saccharomyces cerevisiae (strain ATCC 204508 / S288c) (Baker's yeast) protein is Small ribosomal subunit protein mS45 (MRPS35).